The chain runs to 173 residues: Inosine/xanthosine triphosphatase (173 aa).

Substrate is bound at residue 8 to 13 (TTNPAK). Positions 38 and 68 each coordinate Mg(2+). Residue 68 to 69 (EA) participates in substrate binding.

It belongs to the YjjX NTPase family. Homodimer. Mg(2+) serves as cofactor. It depends on Mn(2+) as a cofactor.

It carries out the reaction XTP + H2O = XDP + phosphate + H(+). The catalysed reaction is ITP + H2O = IDP + phosphate + H(+). Its function is as follows. Phosphatase that hydrolyzes non-canonical purine nucleotides such as XTP and ITP to their respective diphosphate derivatives. Probably excludes non-canonical purines from DNA/RNA precursor pool, thus preventing their incorporation into DNA/RNA and avoiding chromosomal lesions. The sequence is that of Inosine/xanthosine triphosphatase (yjjX) from Escherichia coli (strain ATCC 8739 / DSM 1576 / NBRC 3972 / NCIMB 8545 / WDCM 00012 / Crooks).